We begin with the raw amino-acid sequence, 483 residues long: MSTLMVQGTTSDAGKSTLVTALCRWLIRQGVAVAPFKPQNMALNSAVTAEGGEIGRAQAVQAQAANLAPHTDMNPVLLKPNSDTGSQVIIHGRAVTSMNAVAYHDYKAIAMQAVLASHARLSEAYPVVMVEGAGSPAEINLRANDIANMGFAEAVDCPVLLIADINRGGVFAHLVGTLELLSPTEQARVKGFIINRFRGDIALLQPGLDWLEARTGKPVVGVLPYVMDLHLEAEDGIDRRQIDKAAQVLKVVVPVLPRISNHTDFDPLRLHPQVDLQFVGPGQPIPAADLIILPGSKSVRSDLAYLRANGWETAVARHLRYGGKVLGICGGLQMLGEQVHDPLGLEGPAGSSDGLGLLAFSTTLEEEKQLRNVRGRLLLEDAQVSGYEIHAGVTTGDGLSNAAVLLDDGRSDGAQSADGQILGTYLHGLFETAAACSALLRWAGLEDVQAVDYHALRERDIERLADLVENHLDTELLRELCGI.

A GATase cobBQ-type domain is found at 248 to 435; the sequence is VLKVVVPVLP…LHGLFETAAA (188 aa). Cysteine 329 acts as the Nucleophile in catalysis. Histidine 427 is a catalytic residue.

This sequence belongs to the CobB/CobQ family. CobQ subfamily.

The protein operates within cofactor biosynthesis; adenosylcobalamin biosynthesis. Its function is as follows. Catalyzes amidations at positions B, D, E, and G on adenosylcobyrinic A,C-diamide. NH(2) groups are provided by glutamine, and one molecule of ATP is hydrogenolyzed for each amidation. The protein is Cobyric acid synthase of Pseudomonas fluorescens (strain SBW25).